We begin with the raw amino-acid sequence, 158 residues long: Antitoxin TacA (158 aa).

Belongs to the TacA antitoxin family. As to quaternary structure, forms a complex with cognate toxin TacT.

Antitoxin component of a type II toxin-antitoxin (TA) system. Counteracts the toxic effect of cognate toxin TacT. In terms of biological role, tacA-TacT both represses and derepresses expression of its own operon. The sequence is that of Antitoxin TacA from Mycobacterium tuberculosis (strain ATCC 25618 / H37Rv).